We begin with the raw amino-acid sequence, 306 residues long: Methionyl-tRNA formyltransferase (306 aa).

(6S)-5,6,7,8-tetrahydrofolate is bound at residue 110–113; sequence SLLP.

Belongs to the Fmt family.

The enzyme catalyses L-methionyl-tRNA(fMet) + (6R)-10-formyltetrahydrofolate = N-formyl-L-methionyl-tRNA(fMet) + (6S)-5,6,7,8-tetrahydrofolate + H(+). Attaches a formyl group to the free amino group of methionyl-tRNA(fMet). The formyl group appears to play a dual role in the initiator identity of N-formylmethionyl-tRNA by promoting its recognition by IF2 and preventing the misappropriation of this tRNA by the elongation apparatus. This chain is Methionyl-tRNA formyltransferase, found in Brucella suis (strain ATCC 23445 / NCTC 10510).